The primary structure comprises 199 residues: Chaperone protein TorD (199 aa).

The protein belongs to the TorD/DmsD family. TorD subfamily.

Its subcellular location is the cytoplasm. In terms of biological role, involved in the biogenesis of TorA. Acts on TorA before the insertion of the molybdenum cofactor and, as a result, probably favors a conformation of the apoenzyme that is competent for acquiring the cofactor. The chain is Chaperone protein TorD from Escherichia coli O6:H1 (strain CFT073 / ATCC 700928 / UPEC).